A 406-amino-acid chain; its full sequence is Riboflavin biosynthesis protein RibBA (406 aa).

Positions 1–209 (MSEREEFKFN…IADLIKYRLR (209 aa)) are DHBP synthase. D-ribulose 5-phosphate contacts are provided by residues 33-34 (RE), D38, 148-152 (RAGHT), and E172. E34 serves as a coordination point for Mg(2+). Position 151 (H151) interacts with Mg(2+). The segment at 210-406 (RETLVEKVAS…VKKDKLGHMF (197 aa)) is GTP cyclohydrolase II. Position 260-264 (260-264 (RVHSE)) interacts with GTP. C265, C276, and C278 together coordinate Zn(2+). GTP contacts are provided by residues Q281, 304-306 (EGR), and T326. Residue D338 is the Proton acceptor; for GTP cyclohydrolase activity of the active site. The Nucleophile; for GTP cyclohydrolase activity role is filled by R340. Residues T361 and K366 each coordinate GTP.

In the N-terminal section; belongs to the DHBP synthase family. This sequence in the C-terminal section; belongs to the GTP cyclohydrolase II family. The cofactor is Mg(2+). Requires Mn(2+) as cofactor. Zn(2+) is required as a cofactor.

It carries out the reaction D-ribulose 5-phosphate = (2S)-2-hydroxy-3-oxobutyl phosphate + formate + H(+). It catalyses the reaction GTP + 4 H2O = 2,5-diamino-6-hydroxy-4-(5-phosphoribosylamino)-pyrimidine + formate + 2 phosphate + 3 H(+). The protein operates within cofactor biosynthesis; riboflavin biosynthesis; 2-hydroxy-3-oxobutyl phosphate from D-ribulose 5-phosphate: step 1/1. Its pathway is cofactor biosynthesis; riboflavin biosynthesis; 5-amino-6-(D-ribitylamino)uracil from GTP: step 1/4. In terms of biological role, catalyzes the conversion of D-ribulose 5-phosphate to formate and 3,4-dihydroxy-2-butanone 4-phosphate. Its function is as follows. Catalyzes the conversion of GTP to 2,5-diamino-6-ribosylamino-4(3H)-pyrimidinone 5'-phosphate (DARP), formate and pyrophosphate. This is Riboflavin biosynthesis protein RibBA from Aquifex aeolicus (strain VF5).